A 273-amino-acid polypeptide reads, in one-letter code: Probable ribosomal RNA small subunit methyltransferase A (273 aa).

The S-adenosyl-L-methionine site is built by N23, L25, G50, E71, D95, and N110.

Belongs to the class I-like SAM-binding methyltransferase superfamily. rRNA adenine N(6)-methyltransferase family. RsmA subfamily.

The protein resides in the cytoplasm. Functionally, specifically dimethylates two adjacent adenosines in the loop of a conserved hairpin near the 3'-end of 16S rRNA in the 30S particle. May play a critical role in biogenesis of 30S subunits. The sequence is that of Probable ribosomal RNA small subunit methyltransferase A from Thermococcus sibiricus (strain DSM 12597 / MM 739).